Here is a 798-residue protein sequence, read N- to C-terminus: Peregrinol diphosphate synthase TPS1, chloroplastic (798 aa).

The N-terminal 25 residues, 1–25 (MASLSTPNINNTTFVNSKTQLPAVK), are a transit peptide targeting the chloroplast. Lys-243 provides a ligand contact to substrate. The Mg(2+) site is built by Asp-377 and Asp-379. Positions 377-380 (DLDD) match the DXDD motif motif. Lys-463 contributes to the substrate binding site.

This sequence belongs to the terpene synthase family. Requires Mg(2+) as cofactor. As to expression, mostly expressed in trichomes of leaves and fruits.

The protein resides in the plastid. The protein localises to the chloroplast. The catalysed reaction is peregrinol diphosphate = (2E,6E,10E)-geranylgeranyl diphosphate + H2O. The protein operates within secondary metabolite biosynthesis; terpenoid biosynthesis. In terms of biological role, involved in the biosynthesis of labdane-type diterpenoid including cleroda-dienols, and peregrinol lactones and furan derivatives, dopaminergic diterpenoids that can bind to dopamine receptors in the human pituitary gland, have probably ability to lower prolactin levels, and are used to treat menstrual cycle disorders (e.g. premenstrual syndrome and mastodynia). Terpene synthase that produces peregrinol diphosphate from geranylgeranyl diphosphate (GGPP). The protein is Peregrinol diphosphate synthase TPS1, chloroplastic of Vitex agnus-castus (Chaste tree).